The primary structure comprises 507 residues: Dihydrolipoyllysine-residue acetyltransferase component of pyruvate dehydrogenase complex, mitochondrial (507 aa).

The region spanning 77 to 153 is the Lipoyl-binding domain; the sequence is HNRVALPALS…PIGKLLCIIV (77 aa). Lysine 118 bears the N6-lipoyllysine mark. Disordered stretches follow at residues 168-223 and 248-270; these read DGAS…VSAS and RILA…TQAV. The Peripheral subunit-binding (PSBD) domain occupies 221 to 258; sequence SASPFAKKLAAENGLDLSGVSGSGPGGRILASDLSQAP. Catalysis depends on residues histidine 480 and aspartate 484.

It belongs to the 2-oxoacid dehydrogenase family. (R)-lipoate is required as a cofactor.

The protein resides in the mitochondrion matrix. The catalysed reaction is N(6)-[(R)-dihydrolipoyl]-L-lysyl-[protein] + acetyl-CoA = N(6)-[(R)-S(8)-acetyldihydrolipoyl]-L-lysyl-[protein] + CoA. The pyruvate dehydrogenase complex catalyzes the overall conversion of pyruvate to acetyl-CoA and CO(2). It contains multiple copies of three enzymatic components: pyruvate dehydrogenase (E1), dihydrolipoamide acetyltransferase (E2) and lipoamide dehydrogenase (E3). The protein is Dihydrolipoyllysine-residue acetyltransferase component of pyruvate dehydrogenase complex, mitochondrial of Caenorhabditis elegans.